The sequence spans 91 residues: Elongation factor 1-beta (91 aa).

The protein belongs to the EF-1-beta/EF-1-delta family.

Promotes the exchange of GDP for GTP in EF-1-alpha/GDP, thus allowing the regeneration of EF-1-alpha/GTP that could then be used to form the ternary complex EF-1-alpha/GTP/AAtRNA. This is Elongation factor 1-beta from Thermococcus gammatolerans (strain DSM 15229 / JCM 11827 / EJ3).